The chain runs to 511 residues: Chromosomal replication initiator protein DnaA (511 aa).

The interval 1-90 (MSVELWQQCV…RRSSAPRAAP (90 aa)) is domain I, interacts with DnaA modulators. The segment at 91–174 (NAPVSAAMAA…QVEGALKHTS (84 aa)) is domain II. Positions 125–161 (TAEPAQASDMAEASSRDSYDSMADSAPAPVAPGRTEQ) are disordered. The interval 175–391 (YLNRTFTFET…GALKRVIAHS (217 aa)) is domain III, AAA+ region. The ATP site is built by Gly-219, Gly-221, Lys-222, and Thr-223. The interval 392–511 (HFMGRDITIE…YKNLLRTLTT (120 aa)) is domain IV, binds dsDNA.

The protein belongs to the DnaA family. In terms of assembly, oligomerizes as a right-handed, spiral filament on DNA at oriC.

Its subcellular location is the cytoplasm. In terms of biological role, plays an essential role in the initiation and regulation of chromosomal replication. ATP-DnaA binds to the origin of replication (oriC) to initiate formation of the DNA replication initiation complex once per cell cycle. Binds the DnaA box (a 9 base pair repeat at the origin) and separates the double-stranded (ds)DNA. Forms a right-handed helical filament on oriC DNA; dsDNA binds to the exterior of the filament while single-stranded (ss)DNA is stabiized in the filament's interior. The ATP-DnaA-oriC complex binds and stabilizes one strand of the AT-rich DNA unwinding element (DUE), permitting loading of DNA polymerase. After initiation quickly degrades to an ADP-DnaA complex that is not apt for DNA replication. Binds acidic phospholipids. The chain is Chromosomal replication initiator protein DnaA from Pseudomonas putida (strain W619).